The primary structure comprises 964 residues: Protein HIRA (964 aa).

WD repeat units follow at residues 10–50 (RHEG…KDNT), 64–103 (DHFG…GTSE), 123–162 (GHTA…CTAV), 165–204 (GHTS…LAHK), 259–331 (GHNA…PLFV), and 335–376 (FFSQ…HRLS). Residues 453 to 490 (SHEDSKKTAGPTADDVKKGNQLSSPVKQREYRRPDGRK) are disordered. The span at 479–490 (KQREYRRPDGRK) shows a compositional bias: basic and acidic residues. Residues 644-685 (LWSDRISGKVTVLAGNANFWAVGCEDGFLQVYTRCGVRAMPA) form a WD 7 repeat. Residues 920–940 (ASNRKVQRLLNEFMDLLLEYE) adopt a coiled-coil conformation.

It belongs to the WD repeat HIR1 family. Interacts with RS2. More abundant in apices and young leaf primordia than in fully expanded leaf tissues.

The protein localises to the nucleus. Its function is as follows. Histone chaperone involved in maintining knox genes silencing throughout leaf development. The sequence is that of Protein HIRA from Zea mays (Maize).